The sequence spans 362 residues: Protein indeterminate-domain 16 (362 aa).

Residues 1 to 22 (MELTQPIRENGDPQGHQLTDPD) are disordered. 2 consecutive C2H2-type zinc fingers follow at residues 39 to 61 (YVCE…RRRH) and 82 to 112 (YVCP…RRKH). Residues 118–142 (WVCERCSKGYAVQSDYKAHLKTCGS) form a CCHC-type 1; atypical zinc finger. Zn(2+)-binding residues include Cys120, Cys123, His136, Cys140, Cys147, Cys149, His162, and Cys166. The CCHC-type 2; atypical zinc finger occupies 145 to 168 (HSCDCGRVFSRVESFIEHQDTCTI). The interval 155–167 (RVESFIEHQDTCT) is SHR-binding. Residues 247 to 278 (SAQARHNEKRETSLTKERANEEARKAEETRQE) form a disordered region. A compositionally biased stretch (basic and acidic residues) spans 251 to 278 (RHNEKRETSLTKERANEEARKAEETRQE). Residues 252-319 (HNEKRETSLT…VREEAIKRIN (68 aa)) adopt a coiled-coil conformation.

As to expression, highly expressed in leaves, hypocotyls, roots, vasculature of cotyledons, floral organs and in the endodermis and vasculaturenof inflorescence stems.

It localises to the nucleus. Its function is as follows. Transcription factor regulating lateral organ morphogenesis and gravitropic responses. Has a redundant role with IDD14 in directing leaf and floral organ morphogenesis. Acts cooperatively with IDD15 to control silique and branche orientation. Involved in the establishment of auxin gradients through the regulation of auxin biosynthesis and transport. This Arabidopsis thaliana (Mouse-ear cress) protein is Protein indeterminate-domain 16.